We begin with the raw amino-acid sequence, 343 residues long: Glyceraldehyde-3-phosphate dehydrogenase (343 aa).

NAD(+)-binding positions include 13 to 14 (TI) and Gly-112. Position 141-143 (141-143 (SCN)) interacts with D-glyceraldehyde 3-phosphate. Catalysis depends on Cys-142, which acts as the Nucleophile. Arg-170 serves as a coordination point for NAD(+). 196–197 (HA) serves as a coordination point for D-glyceraldehyde 3-phosphate. Gln-303 lines the NAD(+) pocket.

The protein belongs to the glyceraldehyde-3-phosphate dehydrogenase family. As to quaternary structure, homotetramer.

It is found in the cytoplasm. The catalysed reaction is D-glyceraldehyde 3-phosphate + phosphate + NADP(+) = (2R)-3-phospho-glyceroyl phosphate + NADPH + H(+). The enzyme catalyses D-glyceraldehyde 3-phosphate + phosphate + NAD(+) = (2R)-3-phospho-glyceroyl phosphate + NADH + H(+). Its pathway is carbohydrate degradation; glycolysis; pyruvate from D-glyceraldehyde 3-phosphate: step 1/5. The chain is Glyceraldehyde-3-phosphate dehydrogenase (gap) from Aeropyrum pernix (strain ATCC 700893 / DSM 11879 / JCM 9820 / NBRC 100138 / K1).